Here is a 283-residue protein sequence, read N- to C-terminus: Non-selective voltage-gated ion channel VDAC1 (283 aa).

N-acetylalanine is present on Ala2. Lys12 contacts ATP. A Glycyl lysine isopeptide (Lys-Gly) (interchain with G-Cter in ubiquitin) cross-link involves residue Lys12. Ser13 bears the Phosphoserine mark. Phosphothreonine is present on Thr19. Residue Lys20 coordinates ATP. Lys20 is subject to N6-acetyllysine; alternate. Position 20 is an N6-succinyllysine; alternate (Lys20). Lys20 is covalently cross-linked (Glycyl lysine isopeptide (Lys-Gly) (interchain with G-Cter in ubiquitin); alternate). Transmembrane regions (beta stranded) follow at residues 26 to 35 (LIKLDLKTKS) and 39 to 47 (LEFTSSGSA). Glycyl lysine isopeptide (Lys-Gly) (interchain with G-Cter in ubiquitin) cross-links involve residues Lys53 and Lys61. The beta stranded transmembrane segment at 54–64 (VNGSLETKYRW) threads the bilayer. Phosphotyrosine is present on Tyr67. 3 consecutive transmembrane segments (beta stranded) span residues 69–76 (LTFTEKWN), 80–89 (TLGTEITVED), and 95–104 (LKLTFDSSFS). Thr107 is subject to Phosphothreonine. Lys109 carries the post-translational modification N6-acetyllysine; alternate. Lys109 is covalently cross-linked (Glycyl lysine isopeptide (Lys-Gly) (interchain with G-Cter in ubiquitin); alternate). Lys110 participates in a covalent cross-link: Glycyl lysine isopeptide (Lys-Gly) (interchain with G-Cter in ubiquitin). A run of 4 beta stranded transmembrane segments spans residues 111–120 (NAKIKTGYKR), 123–130 (INLGCDVD), 137–145 (SIRGALVLG), and 150–158 (LAGYQMNFE). Phosphoserine is present on Ser137. A Glycyl lysine isopeptide (Lys-Gly) (interchain with G-Cter in ubiquitin) cross-link involves residue Lys161. Transmembrane regions (beta stranded) follow at residues 163–175 (RVTQ…GYKT), 178–185 (FQLHTNVN), 189–198 (EFGGSIYQKV), 202–211 (LETAVNLAWT), 218–227 (RFGIAAKYQV), and 231–238 (ACFSAKVN). Residue Ser193 is modified to Phosphoserine; by NEK1. Ser240 carries the phosphoserine modification. Position 242–244 (242–244 (LIG)) interacts with NAD(+). The chain crosses the membrane as a beta stranded span at residues 242–251 (LIGLGYTQTL). Position 252 is an N6-acetyllysine (Lys252). Residues 254–263 (GIKLTLSALL) traverse the membrane as a beta stranded segment. 260-264 (SALLD) serves as a coordination point for NAD(+). Lys266 is modified (N6-acetyllysine; alternate). A Glycyl lysine isopeptide (Lys-Gly) (interchain with G-Cter in ubiquitin); alternate cross-link involves residue Lys266. Residues 273 to 282 (HKLGLGLEFQ) form a beta stranded membrane-spanning segment. Residue Lys274 forms a Glycyl lysine isopeptide (Lys-Gly) (interchain with G-Cter in ubiquitin) linkage.

The protein belongs to the eukaryotic mitochondrial porin family. As to quaternary structure, homodimer and homotrimer; in response to cyclic AMP or calcium; oligomerization is required for scramblase activity. Component of the mitochondrial permeability transition pore complex (mPTPC), at least composed of SPG7, VDAC1 and PPIF. Interacts with SPG7, NIPSNAP2 and SLC25A30. Interacts with hexokinases including HK1. The HK1-VDAC1 complex interacts with ATF2. Interacts with BCL2L1. Interacts with BAK1. Interacts with RTL10/BOP (via BH3 domain). Interacts with amyloid-beta and APP; induces VDAC1 dephosphorylation. Interacts with TMEM41B. Interacts with BCAP31. Interacts with HSPA9; this interaction couples ITPR1 to VDAC1. Post-translationally, phosphorylation at Ser-193 by NEK1 promotes the closed conformational state preventing excessive mitochondrial membrane permeability and subsequent apoptotic cell death after injury. Phosphorylation by the AKT-GSK3B axis stabilizes the protein probably by preventing ubiquitin-mediated proteasomal degradation. In terms of processing, ubiquitinated. Undergoes monoubiquitination and polyubiquitination by PRKN; monoubiquitination at Lys-274 inhibits apoptosis, whereas polyubiquitination leads to its degradation and promotes mitophagy. Deubiquitinated by USP30. As to expression, widely expressed. High levels in heart and kidney with lower levels in brain and ascitic tumor. Very low levels in liver.

Its subcellular location is the mitochondrion outer membrane. It localises to the cell membrane. It is found in the membrane raft. It carries out the reaction Ca(2+)(in) = Ca(2+)(out). The catalysed reaction is Na(+)(in) = Na(+)(out). The enzyme catalyses chloride(in) = chloride(out). It catalyses the reaction Mg(2+)(in) = Mg(2+)(out). It carries out the reaction K(+)(in) = K(+)(out). The catalysed reaction is ATP(in) = ATP(out). The enzyme catalyses L-glutamate(out) = L-glutamate(in). It catalyses the reaction dopamine(out) = dopamine(in). It carries out the reaction acetylcholine(in) = acetylcholine(out). The catalysed reaction is Fe(III)-[cytochrome c](out) = Fe(III)-[cytochrome c](in). The enzyme catalyses a 1,2-diacyl-sn-glycero-3-phosphocholine(in) = a 1,2-diacyl-sn-glycero-3-phosphocholine(out). It catalyses the reaction a 1,2-diacyl-sn-glycero-3-phospho-L-serine(in) = a 1,2-diacyl-sn-glycero-3-phospho-L-serine(out). Its activity is regulated as follows. Inhibited by nitric oxide. Voltage-gated ion channel activity is inhibited by lanthanum(3+) and ruthenium red. Mitochondrial calcium transport is inhibited by lanthanum(3+), ruthenium red and Ru360. Its function is as follows. Non-selective voltage-gated ion channel that mediates the transport of anions and cations through the mitochondrion outer membrane and plasma membrane. The channel at the outer mitochondrial membrane allows diffusion of small hydrophilic molecules; in the plasma membrane it is involved in cell volume regulation and apoptosis. It adopts an open conformation at low or zero membrane potential and a closed conformation at potentials above 30-40 mV. The open state has a weak anion selectivity whereas the closed state is cation-selective. Binds various signaling molecules, including the sphingolipid ceramide, the phospholipid phosphatidylcholine, and the sterols cholesterol and oxysterol. In depolarized mitochondria, acts downstream of PRKN and PINK1 to promote mitophagy or prevent apoptosis; polyubiquitination by PRKN promotes mitophagy, while monoubiquitination by PRKN decreases mitochondrial calcium influx which ultimately inhibits apoptosis. May participate in the formation of the permeability transition pore complex (PTPC) responsible for the release of mitochondrial products that triggers apoptosis. May mediate ATP export from cells. Part of a complex composed of HSPA9, ITPR1 and VDAC1 that regulates mitochondrial calcium-dependent apoptosis by facilitating calcium transport from the ER lumen to the mitochondria intermembrane space thus providing calcium for the downstream calcium channel MCU that directly releases it into mitochondria matrix. Functionally, catalyzes the scrambling of phospholipids across the outer mitochondrial membrane; the mechanism is unrelated to channel activity and is capable of translocating both anionic and zwitterionic phospholipids. The sequence is that of Non-selective voltage-gated ion channel VDAC1 from Rattus norvegicus (Rat).